We begin with the raw amino-acid sequence, 421 residues long: Immunoglobulin heavy constant epsilon (421 aa).

Ig-like domains lie at Pro5 to Thr97, Pro99 to Ser184, Pro201 to Thr301, and Pro310 to Ser410. Residues Cys23 and Cys75 are joined by a disulfide bond. 9 N-linked (GlcNAc...) asparagine glycosylation sites follow: Asn43, Asn72, Asn84, Asn95, Asn166, Asn238, Asn261, Asn365, and Asn415. 3 disulfide bridges follow: Cys121-Cys180, Cys226-Cys285, and Cys330-Cys392.

The basic structural unit consists of two identical heavy chains and two identical light chains; disulfide-linked. N-terminal variable regions of the heavy and light chains form the antigen binding sites, whereas the C-terminal constant regions of the heavy chains interact with immune receptors to mediate effector functions.

The protein resides in the secreted. It localises to the cell membrane. Its function is as follows. Constant region of immunoglobulin heavy chains. Immunoglobulins, also known as antibodies, are membrane-bound or secreted glycoproteins produced by B lymphocytes. In the recognition phase of humoral immunity, the membrane-bound immunoglobulins serve as receptors which, upon binding of a specific antigen, trigger the clonal expansion and differentiation of B lymphocytes into immunoglobulins-secreting plasma cells. Secreted immunoglobulins mediate the effector phase of humoral immunity, which results in the elimination of bound antigens. The antigen binding site is formed by the variable domain of one heavy chain, together with that of its associated light chain. Thus, each immunoglobulin has two antigen binding sites with remarkable affinity for a particular antigen. The variable domains are assembled by a process called V-(D)-J rearrangement and can then be subjected to somatic hypermutations which, after exposure to antigen and selection, allow affinity maturation for a particular antigen. This is Immunoglobulin heavy constant epsilon from Mus musculus (Mouse).